We begin with the raw amino-acid sequence, 147 residues long: Response regulator Rcp1 (147 aa).

In terms of domain architecture, Response regulatory spans 10–135 (VILLVEDSKA…DLFKMVQGIE (126 aa)). The residue at position 68 (Asp68) is a 4-aspartylphosphate.

Post-translationally, phosphorylated by Cph1.

Functionally, forms a two-component system with Cph1 in which it acts as receiver substrate. This Synechocystis sp. (strain ATCC 27184 / PCC 6803 / Kazusa) protein is Response regulator Rcp1 (rcp1).